The primary structure comprises 684 residues: uncharacterized protein (684 aa).

Disordered stretches follow at residues 267–353 (MGAR…TCTD) and 388–449 (SVAS…AERE). Residues 316–326 (GMTSAKASTSY) show a composition bias toward polar residues. Positions 438 to 449 (RPTEARRRAERE) are enriched in basic and acidic residues.

This is an uncharacterized protein from Colorado tick fever virus (strain USA/Florio N-7180) (CTFV).